Reading from the N-terminus, the 84-residue chain is Putative membrane protein insertion efficiency factor (84 aa).

The protein belongs to the UPF0161 family.

The protein resides in the cell inner membrane. Could be involved in insertion of integral membrane proteins into the membrane. This is Putative membrane protein insertion efficiency factor from Shewanella sp. (strain ANA-3).